The primary structure comprises 422 residues: Ribonuclease Y (422 aa).

One can recognise a KH domain in the interval 112 to 172 (TTNIVKLPSD…IRREIATRTL (61 aa)). In terms of domain architecture, HD spans 238 to 331 (VLAHSIEVAK…VAIADSISAS (94 aa)).

It belongs to the RNase Y family.

Its function is as follows. Endoribonuclease that initiates mRNA decay. The protein is Ribonuclease Y of Mycoplasma mycoides.